The sequence spans 210 residues: Regulator of G-protein signaling 17 (210 aa).

The disordered stretch occupies residues 1 to 21 (MRKRQQSQNEGTSAVSQAPGN). In terms of domain architecture, RGS spans 84-200 (NFDKMMKTPA…LNSQIYKSLV (117 aa)).

In terms of assembly, interacts with GNAI1 and GNAQ. Interacts with GNAZ and GNAI2. Forms a complex with mu-opioid receptors and G(alpha)z/i2 subunits, including GNAZ and GNAI2; the formation of this complex results in mu-opioid receptor desensitization. In terms of processing, N- and O-glycosylated in synapsomal membranes. Post-translationally, serine phosphorylated in synapsomal membranes. Sumoylated with SUMO1 and SUM02 in synaptosomes. The sumoylated forms act as a scaffold for sequestering mu-opioid receptor-activated G(alpha) subunits.

The protein localises to the membrane. It localises to the synapse. It is found in the synaptosome. The protein resides in the nucleus. Its subcellular location is the cytoplasm. In terms of biological role, regulates G protein-coupled receptor signaling cascades, including signaling via muscarinic acetylcholine receptor CHRM2 and dopamine receptor DRD2. Inhibits signal transduction by increasing the GTPase activity of G protein alpha subunits, thereby driving them into their inactive GDP-bound form. Binds selectively to GNAZ and GNAI2 subunits, accelerates their GTPase activity and regulates their signaling activities. Negatively regulates mu-opioid receptor-mediated activation of the G-proteins. This Gallus gallus (Chicken) protein is Regulator of G-protein signaling 17 (RGS17).